The sequence spans 143 residues: Aspartate 1-decarboxylase (143 aa).

Ser25 acts as the Schiff-base intermediate with substrate; via pyruvic acid in catalysis. Ser25 is modified (pyruvic acid (Ser)). Thr57 is a binding site for substrate. The active-site Proton donor is the Tyr58. 73–75 lines the substrate pocket; that stretch reads GAA.

Belongs to the PanD family. As to quaternary structure, heterooctamer of four alpha and four beta subunits. It depends on pyruvate as a cofactor. Post-translationally, is synthesized initially as an inactive proenzyme, which is activated by self-cleavage at a specific serine bond to produce a beta-subunit with a hydroxyl group at its C-terminus and an alpha-subunit with a pyruvoyl group at its N-terminus.

The protein localises to the cytoplasm. It carries out the reaction L-aspartate + H(+) = beta-alanine + CO2. It functions in the pathway cofactor biosynthesis; (R)-pantothenate biosynthesis; beta-alanine from L-aspartate: step 1/1. In terms of biological role, catalyzes the pyruvoyl-dependent decarboxylation of aspartate to produce beta-alanine. The protein is Aspartate 1-decarboxylase of Mycolicibacterium paratuberculosis (strain ATCC BAA-968 / K-10) (Mycobacterium paratuberculosis).